Here is a 222-residue protein sequence, read N- to C-terminus: Cysteine protease inhibitor 9 (222 aa).

The N-terminal stretch at 1 to 26 (MKSINILSFLLLSSTLSLVAFARSFS) is a signal peptide. Positions 27 to 42 (SENPIVLPSTCHDDDN) are excised as a propeptide. The Vacuolar targeting signal motif lies at 29–34 (NPIVLP). 2 disulfide bridges follow: Cys-84–Cys-136 and Cys-185–Cys-191.

It belongs to the protease inhibitor I3 (leguminous Kunitz-type inhibitor) family. In terms of tissue distribution, tuber.

Its subcellular location is the vacuole. Its function is as follows. Putative inhibitor of cysteine proteases. Does not inhibit papain. May protect the plant by inhibiting proteases of invading organisms. The chain is Cysteine protease inhibitor 9 from Solanum tuberosum (Potato).